A 417-amino-acid polypeptide reads, in one-letter code: MAQIKNYTLNFGPQHPAAHGVLRLVLELDGEVIQRADPHIGLLHRATEKLAKTRTWIQNIPYMDRLDYVSMMSNEHAYVMAIEKLLQVDVPLRAQYIRVMYDELTRLLNHLLWIGCHGLDVGAMAVFLYAFRDREDIFDMYEAVSGARMHAAYYRPGGVYRDLPDQMAQYDKSKIRSASAVKRLNENRSGTLLDFIEQFANGFDANVDEYCNLLTDNRIWKQRLVNIGIVTPKRALQLGFTGPMLRGSGIEWDLRKKQPYEVYDRLDFDIPVGVNGDSYDRYLVRMEEMRQSNHIIKQCVAWLKANPGPVMSTNHKVSPPKRVDMKTNMEELIHHFKLFTEGIHVPDGEAYSAVEHPKGEFGIYLISDGANKPYRMKIRAPGFVHLSSMDEMSRGHMLADAVTIIGTQDIVFGEIDR.

The protein belongs to the complex I 49 kDa subunit family. As to quaternary structure, NDH-1 is composed of 14 different subunits. Subunits NuoB, C, D, E, F, and G constitute the peripheral sector of the complex.

The protein resides in the cell inner membrane. It catalyses the reaction a quinone + NADH + 5 H(+)(in) = a quinol + NAD(+) + 4 H(+)(out). Its function is as follows. NDH-1 shuttles electrons from NADH, via FMN and iron-sulfur (Fe-S) centers, to quinones in the respiratory chain. The immediate electron acceptor for the enzyme in this species is believed to be ubiquinone. Couples the redox reaction to proton translocation (for every two electrons transferred, four hydrogen ions are translocated across the cytoplasmic membrane), and thus conserves the redox energy in a proton gradient. The polypeptide is NADH-quinone oxidoreductase subunit D (Polynucleobacter necessarius subsp. necessarius (strain STIR1)).